Here is a 292-residue protein sequence, read N- to C-terminus: Protein LRATD1 (292 aa).

Position 38 is a phosphoserine (Ser38). An LRAT domain is found at 133-228 (PATEQPAPAP…CRFGKREFKA (96 aa)).

The protein belongs to the LRATD family.

It is found in the cytoplasm. Its function is as follows. May play a role in cell morphology and motility. The sequence is that of Protein LRATD1 from Mus musculus (Mouse).